Reading from the N-terminus, the 677-residue chain is Nuclear fusion protein FUS2 (677 aa).

T20 carries the post-translational modification Phosphothreonine. Phosphoserine is present on residues S67, S72, and S84. At T88 the chain carries Phosphothreonine. Phosphoserine occurs at positions 100 and 106. The DH domain maps to 112-326 (KFYKIVQEFY…KYSLFSNKLE (215 aa)).

The protein resides in the cell tip. Promotes cell fusion during zygote formation. This chain is Nuclear fusion protein FUS2 (FUS2), found in Saccharomyces cerevisiae (strain ATCC 204508 / S288c) (Baker's yeast).